The chain runs to 198 residues: Sporulation-specific protein 16 (198 aa).

Necessary for efficient spore formation. The polypeptide is Sporulation-specific protein 16 (SPO16) (Saccharomyces cerevisiae (strain ATCC 204508 / S288c) (Baker's yeast)).